The primary structure comprises 205 residues: Guanylate kinase (205 aa).

Positions 6 to 184 (GLLIVLSGPA…AVERIKAIVT (179 aa)) constitute a Guanylate kinase-like domain. Position 13–20 (13–20 (GPAGVGKG)) interacts with ATP.

It belongs to the guanylate kinase family.

Its subcellular location is the cytoplasm. The enzyme catalyses GMP + ATP = GDP + ADP. In terms of biological role, essential for recycling GMP and indirectly, cGMP. The sequence is that of Guanylate kinase from Shouchella clausii (strain KSM-K16) (Alkalihalobacillus clausii).